We begin with the raw amino-acid sequence, 457 residues long: MTTRHLYLDTSPPAYTGSRTELDKSAFHKTLPVLAVRVRPEKVGKFLKGDAMKRALLDIPKVRTVVSDPKEEGNRLVLLRMPNEGDIPPEALELIKTESNGLTEFNVNLDYNYWTADEILQSFLPEELREGAPSGFAMVGHIAHLNLNEEYLPYKYIIGQLILEKNNRVRTVVNKINSIDTQFRFFKMELLAGEPDYVVEHHESDCRFMFDFTKVYWNSRLHTEHDRLIQVFQPEEVVADVFAGVGPFAIPAGKKGCGVLANDLNPESYKYLAINAKNNRVDDTVKAFCEDGREFIQKSVSRLWEEPLPAYTGPKQSRVQEEKERRRLQRLKAEGQTVPIPPSEKQHGRRRISHFVMNLPDSAISFLDAFRGLLSGAEPALREQYSTMPMVHCHCFTREVDSRVNAEGDIRKRVEEKLGGALTSETSFHFVRSVAPNKDMYCISFRLPPEVAFGERM.

Residues histidine 225, 263-264, 291-292, and asparagine 358 each bind S-adenosyl-L-methionine; these read DL and DG.

Belongs to the class I-like SAM-binding methyltransferase superfamily. TRM5/TYW2 family. In terms of assembly, monomer.

The protein resides in the mitochondrion matrix. It is found in the nucleus. Its subcellular location is the cytoplasm. The enzyme catalyses guanosine(37) in tRNA + S-adenosyl-L-methionine = N(1)-methylguanosine(37) in tRNA + S-adenosyl-L-homocysteine + H(+). Functionally, specifically methylates the N1 position of guanosine-37 in various cytoplasmic and mitochondrial tRNAs. Methylation is not dependent on the nature of the nucleoside 5' of the target nucleoside. This is the first step in the biosynthesis of wybutosine (yW), a modified base adjacent to the anticodon of tRNAs and required for accurate decoding. The polypeptide is tRNA (guanine(37)-N(1))-methyltransferase (Coprinopsis cinerea (strain Okayama-7 / 130 / ATCC MYA-4618 / FGSC 9003) (Inky cap fungus)).